The chain runs to 343 residues: DNA-directed RNA polymerase subunit alpha (343 aa).

The alpha N-terminal domain (alpha-NTD) stretch occupies residues 1–239; it reads MGETVTIQKN…DQLNVFVNFE (239 aa). Positions 255–343 are alpha C-terminal domain (alpha-CTD); sequence FNPAFLKKVD…ELAKRFEDHY (89 aa).

The protein belongs to the RNA polymerase alpha chain family. Homodimer. The RNAP catalytic core consists of 2 alpha, 1 beta, 1 beta' and 1 omega subunit. When a sigma factor is associated with the core the holoenzyme is formed, which can initiate transcription.

The catalysed reaction is RNA(n) + a ribonucleoside 5'-triphosphate = RNA(n+1) + diphosphate. Its function is as follows. DNA-dependent RNA polymerase catalyzes the transcription of DNA into RNA using the four ribonucleoside triphosphates as substrates. The polypeptide is DNA-directed RNA polymerase subunit alpha (Bradyrhizobium sp. (strain BTAi1 / ATCC BAA-1182)).